We begin with the raw amino-acid sequence, 127 residues long: Small ribosomal subunit protein uS12m (127 aa).

This sequence belongs to the universal ribosomal protein uS12 family.

It localises to the mitochondrion. The polypeptide is Small ribosomal subunit protein uS12m (RPS12) (Acanthamoeba castellanii (Amoeba)).